A 321-amino-acid polypeptide reads, in one-letter code: Non-canonical heme oxygenase HOZ, chloroplastic (321 aa).

The transit peptide at 1 to 45 (MKSLVAHFSTPLITARLVPRCIIHRASISAVSFSTVRRRFSPLTM) directs the protein to the chloroplast. The tract at residues 96–116 (CGMLSTFSQKYEGYPSGSMVD) is dimerization. Positions 130, 134, and 135 each coordinate heme b. Dimerization stretches follow at residues 144–166 (KCSLLIARDPEDRTGLRITLHGD) and 205–208 (KVVR).

In terms of assembly, homodimer. Binds to heme in the interdimer interface; the heme iron is coordinated by a fixed water molecule.

The protein localises to the plastid. It is found in the chloroplast. Dimeric beta-barrel protein binding to heme and catalyzing its degradation to produce biliverdin. May function in the tetrapyrrole biosynthetic pathway. The protein is Non-canonical heme oxygenase HOZ, chloroplastic of Arabidopsis thaliana (Mouse-ear cress).